The following is a 216-amino-acid chain: Imidazole glycerol phosphate synthase subunit HisH (216 aa).

One can recognise a Glutamine amidotransferase type-1 domain in the interval 2–216; that stretch reads RVAIIDYGSG…LITNFLRWRP (215 aa). Cysteine 88 (nucleophile) is an active-site residue. Catalysis depends on residues histidine 196 and glutamate 198.

As to quaternary structure, heterodimer of HisH and HisF.

Its subcellular location is the cytoplasm. It catalyses the reaction 5-[(5-phospho-1-deoxy-D-ribulos-1-ylimino)methylamino]-1-(5-phospho-beta-D-ribosyl)imidazole-4-carboxamide + L-glutamine = D-erythro-1-(imidazol-4-yl)glycerol 3-phosphate + 5-amino-1-(5-phospho-beta-D-ribosyl)imidazole-4-carboxamide + L-glutamate + H(+). It carries out the reaction L-glutamine + H2O = L-glutamate + NH4(+). The protein operates within amino-acid biosynthesis; L-histidine biosynthesis; L-histidine from 5-phospho-alpha-D-ribose 1-diphosphate: step 5/9. Its function is as follows. IGPS catalyzes the conversion of PRFAR and glutamine to IGP, AICAR and glutamate. The HisH subunit catalyzes the hydrolysis of glutamine to glutamate and ammonia as part of the synthesis of IGP and AICAR. The resulting ammonia molecule is channeled to the active site of HisF. This chain is Imidazole glycerol phosphate synthase subunit HisH, found in Mesorhizobium japonicum (strain LMG 29417 / CECT 9101 / MAFF 303099) (Mesorhizobium loti (strain MAFF 303099)).